The chain runs to 464 residues: MVPAVNPPTTSNHVAVIGAGAAGLVAARELRREGHSVVVFERGNHIGGVWAYTPNVEPDPLSIDPTRPVIHSSLYSSLRTIIPQECMGFTDFPFSTRLENGSRDPRRHPGHSEVLAYLRDFVREFKIEEMIRFETEVVRVEQAGENPKKWRVKSRNFGDISDEIYDAVVVCNGHYTEPRHALIPGIDTWPGKQIHSHNYRVPEQVKDQVVVVIGSSVSGVDISRDIANVTKEVHISSRSTKPETYEKLPGYDNLWLHSNIETVREDGSVVFKNGKTVYADTIMHCTGYKYYFPFLDTKGEVTVEDNRVGPLYKHVFPPALSPGLSFIGLPWQVIPFPMFELQSKWVAAVLAGRVSLPSQEEMEDTKMFYLKLEASCIPKRYTHLMAELDSQFVYNNWLADQCDYPRIEKWREQMFYKVFKRIQSQASTYKDDWDDDHLIAEAYEDFVKFPSNYPSSLIEREYTS.

18-23 (GAGAAG) lines the FAD pocket. 214–219 (GSSVSG) contributes to the NADP(+) binding site.

It belongs to the FMO family. It depends on FAD as a cofactor.

Catalyzes the conversion of methylthioalkyl glucosinolates of any chain length into methylsulfinylalkyl glucosinolates. In Arabidopsis thaliana (Mouse-ear cress), this protein is Flavin-containing monooxygenase FMO GS-OX-like 7.